A 215-amino-acid polypeptide reads, in one-letter code: Octanoyltransferase (215 aa).

The 176-residue stretch at 31–206 (TSAEDEIWLV…QLVKHLDYAE (176 aa)) folds into the BPL/LPL catalytic domain. Substrate is bound by residues 70 to 77 (RGGQVTYH), 137 to 139 (SLG), and 150 to 152 (GLA). Residue cysteine 168 is the Acyl-thioester intermediate of the active site.

It belongs to the LipB family.

The protein localises to the cytoplasm. The catalysed reaction is octanoyl-[ACP] + L-lysyl-[protein] = N(6)-octanoyl-L-lysyl-[protein] + holo-[ACP] + H(+). Its pathway is protein modification; protein lipoylation via endogenous pathway; protein N(6)-(lipoyl)lysine from octanoyl-[acyl-carrier-protein]: step 1/2. In terms of biological role, catalyzes the transfer of endogenously produced octanoic acid from octanoyl-acyl-carrier-protein onto the lipoyl domains of lipoate-dependent enzymes. Lipoyl-ACP can also act as a substrate although octanoyl-ACP is likely to be the physiological substrate. This chain is Octanoyltransferase, found in Pseudomonas fluorescens (strain SBW25).